A 736-amino-acid polypeptide reads, in one-letter code: Elongation factor 2 (736 aa).

The region spanning Thr-18–Lys-234 is the tr-type G domain. GTP contacts are provided by residues Ala-27–Thr-34, Asp-93–His-97, and Asn-147–Asp-150. Diphthamide is present on His-603.

It belongs to the TRAFAC class translation factor GTPase superfamily. Classic translation factor GTPase family. EF-G/EF-2 subfamily.

The protein resides in the cytoplasm. Catalyzes the GTP-dependent ribosomal translocation step during translation elongation. During this step, the ribosome changes from the pre-translocational (PRE) to the post-translocational (POST) state as the newly formed A-site-bound peptidyl-tRNA and P-site-bound deacylated tRNA move to the P and E sites, respectively. Catalyzes the coordinated movement of the two tRNA molecules, the mRNA and conformational changes in the ribosome. This Saccharolobus solfataricus (strain ATCC 35092 / DSM 1617 / JCM 11322 / P2) (Sulfolobus solfataricus) protein is Elongation factor 2 (fusA).